The chain runs to 829 residues: MQPLQLSPIEQQEFDRLLESLHPEQKDLIPGSVIGPFLLKFGLPQKILAKIWDYCDQEDKGSLDRNQVYACFRLISQAQRGATLQELDYNKAGDPPILPKQAKDDHHIKRSSSETADFTPFRIPINPDERSEYEKEFRENLRGHEDSARPGCMPSSIAKPILLKSSLHYAVLAQIWNLADSAHVGYLEMYQYVIARHLVAICKQYNLIHLPRSLPADVIESAKSETPAMNTNIEQGVTQPSLVNTEQLSHQQSISSTKSSKLDEISADNNAQSAVDNKYSSPPQTIDPQANIKALITPEDRSNFYQLFSKIDNENKGYIVGGEAVPFFMASHLDSEELARIWDTVDTQDRGYIDKDEFAVAMEIIKLRLSGKSLASILAYDDNPTEPTMQQNLVSDDTNASTAVPVAFTNDNVSNVPLSVADNEPNSTLNLLASSDTAAFEPTAVSLHENPSSSLEDLQSAFQNTSFQDQVSTQNQANTADISQNTESGSSTQGQMFGIPPTTQSIPLKMAGFPGGVNSSLTDIKEEEAVSENAPQQEERSFEQIKTSIHIAPENISAIEESKSVPLPTSFATTIPGSTSAALDDQQTTEAPFEEPDEPAHEPTEEEQEEMRKLEEKIESTKYGLETIQTSGKTIKQRIEQKKTRLMILREELQELDAIKEEAQKQISQSLIADQQLSTQIGSVGMGKKQAVKELRKLQAKIDSIIADSMSPMGTGAVNSPAIKPQVTPAPPTPAPTPAVKHHPPPPPVRSSISPSMPPAPLTHANSSTPMNYVSQPESPPQSYESIQNDNELLQELLSMGFPREKAVIALEATNYDVNEAANILLSSV.

The EH 1 domain occupies 10–109 (EQQEFDRLLE…KQAKDDHHIK (100 aa)). One can recognise an EF-hand 1 domain in the interval 43–78 (LPQKILAKIWDYCDQEDKGSLDRNQVYACFRLISQA). Residues 93 to 121 (GDPPILPKQAKDDHHIKRSSSETADFTPF) are disordered. Residues serine 112 and serine 113 each carry the phosphoserine modification. 2 consecutive EH domains span residues 129–225 (ERSE…AKSE) and 300–398 (DRSN…SDDT). Residues 333–368 (LDSEELARIWDTVDTQDRGYIDKDEFAVAMEIIKLR) form the EF-hand 2 domain. 2 stretches are compositionally biased toward polar residues: residues 466–506 (SFQD…TQSI) and 574–590 (TIPG…QTTE). Disordered stretches follow at residues 466-520 (SFQD…VNSS), 574-614 (TIPG…MRKL), and 724-785 (KPQV…QSYE). A coiled-coil region spans residues 602–709 (EPTEEEQEEM…AKIDSIIADS (108 aa)). Positions 728–737 (TPAPPTPAPT) are enriched in pro residues. Positions 764 to 774 (HANSSTPMNYV) are enriched in polar residues. A compositionally biased stretch (low complexity) spans 775-785 (SQPESPPQSYE). Positions 788–828 (QNDNELLQELLSMGFPREKAVIALEATNYDVNEAANILLSS) constitute a UBA domain.

The protein is UBA domain-containing protein 8 (ucp8) of Schizosaccharomyces pombe (strain 972 / ATCC 24843) (Fission yeast).